Consider the following 113-residue polypeptide: Iron-sulfur cluster insertion protein ErpA (113 aa).

Iron-sulfur cluster contacts are provided by Cys-41, Cys-105, and Cys-107.

The protein belongs to the HesB/IscA family. As to quaternary structure, homodimer. Requires iron-sulfur cluster as cofactor.

Its function is as follows. Required for insertion of 4Fe-4S clusters for at least IspG. The protein is Iron-sulfur cluster insertion protein ErpA of Hydrogenovibrio crunogenus (strain DSM 25203 / XCL-2) (Thiomicrospira crunogena).